The primary structure comprises 886 residues: Isoleucine--tRNA ligase (886 aa).

The 'HIGH' region signature appears at 60–70 (PYANGDIHIGH). Position 546 (Glu-546) interacts with L-isoleucyl-5'-AMP. A 'KMSKS' region motif is present at residues 587 to 591 (KMSKS). Lys-590 serves as a coordination point for ATP. Zn(2+) is bound by residues Cys-856, Cys-859, Cys-870, and Cys-873.

The protein belongs to the class-I aminoacyl-tRNA synthetase family. IleS type 1 subfamily. In terms of assembly, monomer. Zn(2+) is required as a cofactor.

The protein localises to the cytoplasm. It catalyses the reaction tRNA(Ile) + L-isoleucine + ATP = L-isoleucyl-tRNA(Ile) + AMP + diphosphate. In terms of biological role, catalyzes the attachment of isoleucine to tRNA(Ile). As IleRS can inadvertently accommodate and process structurally similar amino acids such as valine, to avoid such errors it has two additional distinct tRNA(Ile)-dependent editing activities. One activity is designated as 'pretransfer' editing and involves the hydrolysis of activated Val-AMP. The other activity is designated 'posttransfer' editing and involves deacylation of mischarged Val-tRNA(Ile). In Mesomycoplasma hyopneumoniae (strain J / ATCC 25934 / NCTC 10110) (Mycoplasma hyopneumoniae), this protein is Isoleucine--tRNA ligase.